The chain runs to 236 residues: MKTEQDLQELYFPTPKLIEWDNGVRQYSSVRGDTEVLLSYVPPHTNVEPHQHKEVQIGLVVSGELSMTVGDVTRKMTALESAYIAPPNVPHGARNETDQEVIAIDIKRLKAGETYTSPEDYFLNIFKTRDLLPGMEVTFFVEDWVEIMLANIPGNGGEMPFHKHRNEQIGICIGGGYDMTIEGCKVDMTFGTAYFCDPREDHGAINRFEKDSKSVNIFFPPRYNRAKAKKLEAKES.

Cupin type-1 domains lie at 40–106 (YVPP…AIDI) and 151–215 (NIPG…SKSV). Residues His-50, His-52, Gln-56, His-91, His-162, His-164, Gln-168, and His-202 each contribute to the a divalent metal cation site. Substrate is bound at residue Tyr-223.

Monomer. The cofactor is Fe(2+). It depends on Co(2+) as a cofactor.

It is found in the cytoplasm. It catalyses the reaction 3-[(4R)-4-hydroxycyclohexa-1,5-dien-1-yl]-2-oxopropanoate = 3-[(1E,4R)-4-hydroxycyclohex-2-en-1-ylidene]pyruvate. It functions in the pathway antibiotic biosynthesis; bacilysin biosynthesis. Functionally, part of the bacABCDEF operon responsible for the biosynthesis of the nonribosomally synthesized dipeptide antibiotic bacilysin, composed of L-alanine and L-anticapsin. Bacilysin is an irreversible inactivator of the glutaminase domain of glucosamine synthetase. BacB catalyzes the allylic isomerization of the endocyclic-delta(4),delta(8)-7R-dihydro-hydroxyphenylpyruvate (en-H2HPP) to generate a mixture of 3E,7R- and 3Z, 7R-olefins of the exocyclic-delta(3),delta(5)-dihydro-hydroxyphenylpyruvate (ex-H2HPP). This Bacillus subtilis protein is H2HPP isomerase.